The sequence spans 601 residues: Glutathione-regulated potassium-efflux system protein KefB (601 aa).

Transmembrane regions (helical) follow at residues 4 to 24 (SDFL…VPLA), 29 to 49 (IGAV…GLGF), 55 to 75 (EILH…GLEL), 87 to 107 (IFGV…GLLM), 115 to 135 (AAVV…LQLM), 152 to 172 (VLLF…LLAG), 177 to 197 (HFDW…LIGG), 207 to 227 (FIAA…LVLG), 230 to 250 (LFMD…GVLL), 268 to 288 (GLLL…GVLY), 291 to 311 (LLWV…VLYL), 324 to 344 (MQFA…FSTA), and 356 to 376 (ALLL…MKLV). Residues 400-519 (KPQVIVVGFG…AGVTQFSRET (120 aa)) form the RCK N-terminal domain.

The protein belongs to the monovalent cation:proton antiporter 2 (CPA2) transporter (TC 2.A.37) family. KefB subfamily. As to quaternary structure, interacts with the regulatory subunit KefG.

It localises to the cell inner membrane. Functionally, pore-forming subunit of a potassium efflux system that confers protection against electrophiles. Catalyzes K(+)/H(+) antiport. The chain is Glutathione-regulated potassium-efflux system protein KefB from Escherichia coli O81 (strain ED1a).